The chain runs to 825 residues: Tuftelin-interacting protein 11 (825 aa).

Residues 1–135 (MSMSHLYGKD…RTFAGGIKSN (135 aa)) form a disordered region. Over residues 11-25 (EDSDGVEMENFEITD) the composition is skewed to acidic residues. Composition is skewed to basic and acidic residues over residues 41–61 (QTKE…DERP) and 85–114 (PAAE…EAKK). Residues 122–135 (KPSQRTFAGGIKSN) show a composition bias toward polar residues. The G-patch domain occupies 145-191 (TKGIGQKLLQKMGYVQGRGLGKNAQGIIAPIEAKQRKGKGAVGAYGS).

Belongs to the TFP11/STIP family. Identified in the spliceosome C complex.

It localises to the nucleus. Functionally, involved in pre-mRNA splicing, specifically in spliceosome disassembly during late-stage splicing events. In Xenopus tropicalis (Western clawed frog), this protein is Tuftelin-interacting protein 11 (tfip11).